The following is a 317-amino-acid chain: Transcriptional regulator LsrR (317 aa).

Positions Gln33–Gln56 form a DNA-binding region, H-T-H motif.

The protein belongs to the SorC transcriptional regulatory family.

It localises to the cytoplasm. Inactivated by phosphorylated autoinducer-2 (phospho-AI-2). Phospho-AI-2 acts by binding to LsrR, which is then unable to bind to the promoter regions, allowing the transcription of the target genes. Its function is as follows. Transcriptional regulator that represses the expression of the lsr operon in the absence of the quorum-sensing signaling molecule autoinducer 2 (AI-2). It also represses the expression of the lsrRK operon. Acts by binding directly to the lsrA and lsrR promoter regions. In the presence of phosphorylated autoinducer-2 (phospho-AI-2), LsrR is inactivated, leading to the transcription of the genes. In Escherichia coli O157:H7, this protein is Transcriptional regulator LsrR (lsrR).